The chain runs to 191 residues: Aminodeoxychorismate synthase component 2 (191 aa).

Residues 1-191 enclose the Glutamine amidotransferase type-1 domain; it reads MLLLIDNYDS…HQLLDNFLNR (191 aa). Residues C79, H172, and E174 contribute to the active site.

Monomer. Heterodimer consisting of two non-identical subunits: a glutamine amidotransferase subunit (PabA) and a aminodeoxychorismate synthase subunit (PabB).

It catalyses the reaction chorismate + L-glutamine = 4-amino-4-deoxychorismate + L-glutamate. It participates in cofactor biosynthesis; tetrahydrofolate biosynthesis; 4-aminobenzoate from chorismate: step 1/2. Its function is as follows. Part of a heterodimeric complex that catalyzes the two-step biosynthesis of 4-amino-4-deoxychorismate (ADC), a precursor of p-aminobenzoate (PABA) and tetrahydrofolate. In the first step, a glutamine amidotransferase (PabA) generates ammonia as a substrate that, along with chorismate, is used in the second step, catalyzed by aminodeoxychorismate synthase (PabB) to produce ADC. PabA converts glutamine into glutamate only in the presence of stoichiometric amounts of PabB. This chain is Aminodeoxychorismate synthase component 2 (pabA), found in Serratia marcescens.